The sequence spans 305 residues: Mat- sexual cell fertilization-promoting factor (305 aa).

A DNA-binding region (alpha box) is located at residues 38-93 (PAKKKVNGFMGYRSYYSSMFSQLPQKERSPILTTLWQQDPFHKEWDFMCAVYSAIR).

It belongs to the MATALPHA1 family.

Its subcellular location is the nucleus. Its function is as follows. Controls fertilization, probably by determining the mating type. May be involved in the post-fertilization steps of the sexual cycle besides mat+. It is required for the developmental events that occur in the female organ after fertilization. The sequence is that of Mat- sexual cell fertilization-promoting factor (FMR1) from Podospora anserina (Pleurage anserina).